The chain runs to 393 residues: S-adenosylmethionine synthase 2 (393 aa).

Glu9 lines the Mg(2+) pocket. His15 lines the ATP pocket. Glu43 serves as a coordination point for K(+). Residues Glu56 and Gln99 each contribute to the L-methionine site. Residues 167–169 (DGK), 235–238 (SGRF), Asp246, 252–253 (RK), Ala269, Lys273, and Lys277 each bind ATP. Asp246 is a binding site for L-methionine. Lys277 provides a ligand contact to L-methionine.

Belongs to the AdoMet synthase family. As to quaternary structure, homotetramer. It depends on Mn(2+) as a cofactor. The cofactor is Mg(2+). Co(2+) is required as a cofactor. Requires K(+) as cofactor.

It localises to the cytoplasm. It catalyses the reaction L-methionine + ATP + H2O = S-adenosyl-L-methionine + phosphate + diphosphate. Its pathway is amino-acid biosynthesis; S-adenosyl-L-methionine biosynthesis; S-adenosyl-L-methionine from L-methionine: step 1/1. Catalyzes the formation of S-adenosylmethionine from methionine and ATP. The reaction comprises two steps that are both catalyzed by the same enzyme: formation of S-adenosylmethionine (AdoMet) and triphosphate, and subsequent hydrolysis of the triphosphate. This chain is S-adenosylmethionine synthase 2 (SAMS2), found in Elaeagnus umbellata (Autumn olive).